Here is a 455-residue protein sequence, read N- to C-terminus: Bifunctional protein GlmU (455 aa).

The pyrophosphorylase stretch occupies residues 1–226 (MSLDIVILAA…AMEVQGANDR (226 aa)). Residues 8–11 (LAAG), Lys22, Gln73, 78–79 (GT), 99–101 (YGD), Gly136, Glu151, Asn166, and Asn224 contribute to the UDP-N-acetyl-alpha-D-glucosamine site. Residue Asp101 participates in Mg(2+) binding. Asn224 contacts Mg(2+). The interval 227–247 (KQLSELERHYQLREARRLMAA) is linker. The N-acetyltransferase stretch occupies residues 248–455 (GVTLRDPSRF…WKRPVKITKD (208 aa)). UDP-N-acetyl-alpha-D-glucosamine contacts are provided by Arg330 and Lys348. His360 (proton acceptor) is an active-site residue. Residues Tyr363 and Asn374 each coordinate UDP-N-acetyl-alpha-D-glucosamine. Acetyl-CoA-binding positions include Ala377, 383-384 (NY), Ser402, Ala420, and Arg437.

It in the N-terminal section; belongs to the N-acetylglucosamine-1-phosphate uridyltransferase family. In the C-terminal section; belongs to the transferase hexapeptide repeat family. In terms of assembly, homotrimer. Mg(2+) is required as a cofactor.

It localises to the cytoplasm. The enzyme catalyses alpha-D-glucosamine 1-phosphate + acetyl-CoA = N-acetyl-alpha-D-glucosamine 1-phosphate + CoA + H(+). It carries out the reaction N-acetyl-alpha-D-glucosamine 1-phosphate + UTP + H(+) = UDP-N-acetyl-alpha-D-glucosamine + diphosphate. It participates in nucleotide-sugar biosynthesis; UDP-N-acetyl-alpha-D-glucosamine biosynthesis; N-acetyl-alpha-D-glucosamine 1-phosphate from alpha-D-glucosamine 6-phosphate (route II): step 2/2. The protein operates within nucleotide-sugar biosynthesis; UDP-N-acetyl-alpha-D-glucosamine biosynthesis; UDP-N-acetyl-alpha-D-glucosamine from N-acetyl-alpha-D-glucosamine 1-phosphate: step 1/1. Its pathway is bacterial outer membrane biogenesis; LPS lipid A biosynthesis. Its function is as follows. Catalyzes the last two sequential reactions in the de novo biosynthetic pathway for UDP-N-acetylglucosamine (UDP-GlcNAc). The C-terminal domain catalyzes the transfer of acetyl group from acetyl coenzyme A to glucosamine-1-phosphate (GlcN-1-P) to produce N-acetylglucosamine-1-phosphate (GlcNAc-1-P), which is converted into UDP-GlcNAc by the transfer of uridine 5-monophosphate (from uridine 5-triphosphate), a reaction catalyzed by the N-terminal domain. The polypeptide is Bifunctional protein GlmU (Pseudomonas syringae pv. tomato (strain ATCC BAA-871 / DC3000)).